We begin with the raw amino-acid sequence, 100 residues long: MKLLPREIDKLLLFTAALLAERRKKRGLKLNYPEAIALISFVVLEGARDGKNVAELMEIGRNVLSKDDVIPGVSEMISNVQIEATFLDGTKLVTIHDPII.

Belongs to the urease gamma subunit family. Heterotrimer of UreA (gamma), UreB (beta) and UreC (alpha) subunits. Three heterotrimers associate to form the active enzyme.

It localises to the cytoplasm. The catalysed reaction is urea + 2 H2O + H(+) = hydrogencarbonate + 2 NH4(+). It functions in the pathway nitrogen metabolism; urea degradation; CO(2) and NH(3) from urea (urease route): step 1/1. The protein is Urease subunit gamma of Blochmanniella floridana.